We begin with the raw amino-acid sequence, 556 residues long: Formate--tetrahydrofolate ligase (556 aa).

Residue 65-72 (TAAGEGKS) coordinates ATP.

The protein belongs to the formate--tetrahydrofolate ligase family.

The catalysed reaction is (6S)-5,6,7,8-tetrahydrofolate + formate + ATP = (6R)-10-formyltetrahydrofolate + ADP + phosphate. The protein operates within one-carbon metabolism; tetrahydrofolate interconversion. This is Formate--tetrahydrofolate ligase from Elusimicrobium minutum (strain Pei191).